We begin with the raw amino-acid sequence, 314 residues long: Homeobox protein DBX1-A (314 aa).

Positions 175–234 form a DNA-binding region, homeobox; sequence GMLRRAVFSDVQRKALEKMFQKQKYISKPDRKKLAAKLGLKDSQVKIWFQNRRMKWRNSK. Disordered stretches follow at residues 234–279 and 292–314; these read KERE…CAPS and STDS…ITVS. Residues 258-267 are compositionally biased toward basic and acidic residues; the sequence is DLSDVGKKSS. Acidic residues predominate over residues 305-314; sequence SESEDEITVS.

This sequence belongs to the H2.0 homeobox family.

It is found in the nucleus. This is Homeobox protein DBX1-A (dbx1a) from Danio rerio (Zebrafish).